The primary structure comprises 3637 residues: Replicase polyprotein 1ab (3637 aa).

Residues 8-28 (CLCTPNARVFWERGQVYCTRC) form a C4-type; atypical zinc finger. The region spanning 69–181 (ECRPGGMCWL…KGLCPFADAR (113 aa)) is the Peptidase C31 domain. Positions 69-183 (ECRPGGMCWL…LCPFADARAN (115 aa)) are PCP1-alpha. Residues C76 and H147 each act as for Nsp1-alpha papain-like cysteine proteinase activity in the active site. The PCP1-beta stretch occupies residues 262-380 (RDTKFSKCWE…KFRFQTRKYY (119 aa)). The 120-residue stretch at 262–381 (RDTKFSKCWE…FRFQTRKYYG (120 aa)) folds into the Peptidase C32 domain. Catalysis depends on for Nsp1-beta papain-like cysteine proteinase activity residues C269 and H340. One can recognise a Peptidase C33 domain in the interval 381–486 (GYSPPGDGAC…RGVCGECEMG (106 aa)). Catalysis depends on for Nsp2 cysteine proteinase activity residues C390 and H456. Disordered stretches follow at residues 676-743 (CKPK…AALK) and 865-899 (QQKTSGGCGEREFKDVGRKSGAERTPSKRDLGVSL). Positions 678-689 (PKRKRSRKKKTR) are enriched in basic residues. Basic and acidic residues-rich tracts occupy residues 714–727 (DTRETCASEKKAEK) and 873–895 (GEREFKDVGRKSGAERTPSKRDL). 7 helical membrane passes run 940–960 (WLNHQVFVLSSHLLAVWSFIF), 981–1001 (VLLCFYLPAIGFMTLVGCVFG), 1083–1103 (FYFLRLMVLLDLGLVFLAVAL), 1287–1307 (IADFVCLGLYVLLNFLLSAWL), 1362–1382 (ALMVAIMATVAIFFAKISLLV), 1390–1410 (CLLMYAFPSLSIAAFGFPFVL), and 1423–1443 (VQFFLLAVNVWAGVASVVVLI). Residues 979-1103 (CCVLLCFYLP…LGLVFLAVAL (125 aa)) are HD1. An HD2 region spans residues 1287-1446 (IADFVCLGLY…ASVVVLISSW (160 aa)). The region spanning 1511-1712 (GSLRTRGCAK…AVVESLPALE (202 aa)) is the Peptidase S32 domain. Active-site charge relay system; for 3C-like serine proteinase activity residues include H1549, D1574, and S1626. 5 helical membrane passes run 1735–1755 (DVPVIRIAFFFLNEILPVMLA), 1761–1781 (FALSLFFCVHWLFCSSVAVAF), 1801–1821 (LVIAALNRPCGPFGFSLLGQL), 1824–1844 (CCLMLCLLDIELQLLGCLYLG), and 1853–1873 (EIFFHPTGQFMFLPLFLSLFK). An HD3 region spans residues 1735 to 1872 (DVPVIRIAFF…MFLPLFLSLF (138 aa)). A NiRAN domain is found at 2214-2372 (SLNGLQQASA…LPYKLHPVRG (159 aa)). A RdRp catalytic domain is found at 2611 to 2745 (GRCLEADLAS…YDESSELPNY (135 aa)). One can recognise an AV ZBD domain in the interval 2865–2928 (KKKCRTCAHC…SPVMSLNTEL (64 aa)). 12 residues coordinate Zn(2+): C2871, C2874, C2884, C2889, H2892, H2894, H2896, H2898, C2905, H2907, C2914, and C2917. The region spanning 2985-3137 (QVMKVAQTCA…AFALMLGRQL (153 aa)) is the (+)RNA virus helicase ATP-binding domain. 3013–3020 (GAPGTGKT) is a binding site for ATP. One can recognise a (+)RNA virus helicase C-terminal domain in the interval 3138 to 3269 (IEVFRFGPSI…CGEQPMMISE (132 aa)). In terms of domain architecture, AV-Nsp11N/CoV-Nsp15M spans 3293 to 3389 (EGTASPLPQV…LTKFLKGKPV (97 aa)). The NendoU domain occupies 3391-3513 (LPDSLMSTGR…MVWKDATAYF (123 aa)). Residues H3422, H3437, and K3466 contribute to the active site.

Belongs to the arteriviridae polyprotein family. In terms of processing, specific enzymatic cleavages in vivo by its own proteases yield mature proteins. There are two alternative pathways for processing. Either nsp4-5 is cleaved, which represents the major pathway or the nsp5-6 and nsp6-7 are processed, which represents the minor pathway. The major pathway occurs when nsp2 acts as a cofactor for nsp4.

The protein resides in the host membrane. The protein localises to the host cytoplasm. It is found in the host perinuclear region. It carries out the reaction RNA(n) + a ribonucleoside 5'-triphosphate = RNA(n+1) + diphosphate. It catalyses the reaction ATP + H2O = ADP + phosphate + H(+). The catalysed reaction is uridylyl-uridylyl-ribonucleotide-RNA = a 3'-end uridylyl-2',3'-cyclophospho-uridine-RNA + a 5'-end dephospho-ribonucleoside-RNA. In terms of biological role, the replicase polyprotein 1ab is a multifunctional protein: it contains the activities necessary for the transcription of negative stranded RNA, leader RNA, subgenomic mRNAs and progeny virion RNA as well as proteinases responsible for the cleavage of the polyprotein into functional products. Functionally, the Nsp1 chain is essential for viral subgenomic mRNA synthesis. Its function is as follows. The 3C-like serine proteinase chain is responsible for the majority of cleavages as it cleaves the C-terminus of the polyprotein. The helicase chain, which contains a zinc finger structure, displays RNA and DNA duplex-unwinding activities with 5' to 3' polarity. In terms of biological role, plays a role in viral transcription/replication and prevents the simultaneous activation of host cell dsRNA sensors, such as MDA5/IFIH1, OAS, and PKR. Acts by degrading the 5'-polyuridines generated during replication of the poly(A) region of viral genomic and subgenomic RNAs. Catalyzes a two-step reaction in which a 2'3'-cyclic phosphate (2'3'-cP) is first generated by 2'-O transesterification, which is then hydrolyzed to a 3'-phosphate (3'-P). If not degraded, poly(U) RNA would hybridize with poly(A) RNA tails and activate host dsRNA sensors. The chain is Replicase polyprotein 1ab (rep) from Mus musculus domesticus (western European house mouse).